The primary structure comprises 183 residues: Transcription termination/antitermination protein NusG (183 aa).

Residues 131 to 161 (PGEEVRVTEGPFADFNGTVEEVDYEKGRLKV) enclose the KOW domain.

The protein belongs to the NusG family.

Participates in transcription elongation, termination and antitermination. This is Transcription termination/antitermination protein NusG from Pasteurella multocida (strain Pm70).